The following is a 402-amino-acid chain: Deoxyguanosinetriphosphate triphosphohydrolase-like protein 2 (402 aa).

The HD domain maps to 72-215; the sequence is RLTHSLEVAQ…MDLADEIAYA (144 aa).

It belongs to the dGTPase family. Type 2 subfamily.

This Vibrio cholerae serotype O1 (strain ATCC 39315 / El Tor Inaba N16961) protein is Deoxyguanosinetriphosphate triphosphohydrolase-like protein 2.